The chain runs to 333 residues: Glyceraldehyde-3-phosphate dehydrogenase 1 (333 aa).

NAD(+) is bound by residues 12–13 (RI), Asp-35, and Arg-79. D-glyceraldehyde 3-phosphate contacts are provided by residues 152 to 154 (SCT), Thr-183, Arg-198, 211 to 212 (SG), and Arg-234. Residue Cys-153 is the Nucleophile of the active site. Residue Asn-314 coordinates NAD(+).

This sequence belongs to the glyceraldehyde-3-phosphate dehydrogenase family. As to quaternary structure, homotetramer.

The protein resides in the cytoplasm. It catalyses the reaction D-glyceraldehyde 3-phosphate + phosphate + NAD(+) = (2R)-3-phospho-glyceroyl phosphate + NADH + H(+). It participates in carbohydrate degradation; glycolysis; pyruvate from D-glyceraldehyde 3-phosphate: step 1/5. With respect to regulation, resistant to pentalenolactone (PL). In terms of biological role, catalyzes the oxidative phosphorylation of glyceraldehyde 3-phosphate (G3P) to 1,3-bisphosphoglycerate (BPG) using the cofactor NAD. The first reaction step involves the formation of a hemiacetal intermediate between G3P and a cysteine residue, and this hemiacetal intermediate is then oxidized to a thioester, with concomitant reduction of NAD to NADH. The reduced NADH is then exchanged with the second NAD, and the thioester is attacked by a nucleophilic inorganic phosphate to produce BPG. This Streptomyces arenae protein is Glyceraldehyde-3-phosphate dehydrogenase 1 (gap1).